Reading from the N-terminus, the 452-residue chain is Exodeoxyribonuclease 7 large subunit (452 aa).

The protein belongs to the XseA family. Heterooligomer composed of large and small subunits.

It localises to the cytoplasm. It carries out the reaction Exonucleolytic cleavage in either 5'- to 3'- or 3'- to 5'-direction to yield nucleoside 5'-phosphates.. Its function is as follows. Bidirectionally degrades single-stranded DNA into large acid-insoluble oligonucleotides, which are then degraded further into small acid-soluble oligonucleotides. This Lysinibacillus sphaericus (strain C3-41) protein is Exodeoxyribonuclease 7 large subunit.